The primary structure comprises 279 residues: MADS-box transcription factor PHERES 1 (279 aa).

An MADS-box domain is found at 1–60 (MRGKMKLSFIENDSVRKTTFTKRKKGMLKKFNELVTLCGVDACAVIRSPYNSIQEPWPSR).

In terms of assembly, interacts with AGL61/DIANA and AGL62. Male gametophyte, embryo and endosperm.

Its subcellular location is the nucleus. Probable transcription factor involved in the development of gametophytes and seeds. The chain is MADS-box transcription factor PHERES 1 (PHE1) from Arabidopsis thaliana (Mouse-ear cress).